Reading from the N-terminus, the 115-residue chain is Large ribosomal subunit protein bL19 (115 aa).

This sequence belongs to the bacterial ribosomal protein bL19 family.

Its function is as follows. This protein is located at the 30S-50S ribosomal subunit interface and may play a role in the structure and function of the aminoacyl-tRNA binding site. This chain is Large ribosomal subunit protein bL19, found in Francisella tularensis subsp. tularensis (strain FSC 198).